A 91-amino-acid polypeptide reads, in one-letter code: MCLLQLPVVLLLLSAALNTLKATPIASDTDHRVDKRKCNTATCATQRLTNFLVRSSHNLGAALPPTKVGSNTYGRRNAEVVDVELLHYLPL.

The N-terminal stretch at 1 to 22 is a signal peptide; it reads MCLLQLPVVLLLLSAALNTLKA. A propeptide spanning residues 23-34 is cleaved from the precursor; the sequence is TPIASDTDHRVD. A disulfide bond links Cys38 and Cys43. Tyr73 carries the tyrosine amide modification. The propeptide occupies 77–91; that stretch reads NAEVVDVELLHYLPL.

The protein belongs to the calcitonin family. As to quaternary structure, can form homodimers. Interacts with IDE and INS. Interaction with INS inhibits homodimerization and fibril formation.

The protein localises to the secreted. Amylin/IAPP is a glucoregulatory peptide hormone that plays an important role in the regulation of energy homeostasis. Selectively inhibits insulin-stimulated glucose utilization and glycogen deposition in muscle, while not affecting adipocyte glucose metabolism. IAPP function is mediated by the CALCR-RAMPs (AMYRs) receptor complexes. Amylin can also bind CALCR receptor in the absence of RAMPs, although it is more selective for AMYRs. This chain is Islet amyloid polypeptide (IAPP), found in Octodon degus (Degu).